We begin with the raw amino-acid sequence, 160 residues long: Transcription elongation factor GreA (160 aa).

Residues 14–76 adopt a coiled-coil conformation; that stretch reads VKKLEEELEY…QLENMLKNAS (63 aa).

The protein belongs to the GreA/GreB family.

Its function is as follows. Necessary for efficient RNA polymerase transcription elongation past template-encoded arresting sites. The arresting sites in DNA have the property of trapping a certain fraction of elongating RNA polymerases that pass through, resulting in locked ternary complexes. Cleavage of the nascent transcript by cleavage factors such as GreA or GreB allows the resumption of elongation from the new 3'terminus. GreA releases sequences of 2 to 3 nucleotides. The polypeptide is Transcription elongation factor GreA (Clostridium botulinum (strain Okra / Type B1)).